Here is a 255-residue protein sequence, read N- to C-terminus: Hydroxyacylglutathione hydrolase (255 aa).

7 residues coordinate Zn(2+): His56, His58, Asp60, His61, His114, Asp133, and His171.

This sequence belongs to the metallo-beta-lactamase superfamily. Glyoxalase II family. As to quaternary structure, monomer. Zn(2+) serves as cofactor.

It catalyses the reaction an S-(2-hydroxyacyl)glutathione + H2O = a 2-hydroxy carboxylate + glutathione + H(+). The protein operates within secondary metabolite metabolism; methylglyoxal degradation; (R)-lactate from methylglyoxal: step 2/2. Functionally, thiolesterase that catalyzes the hydrolysis of S-D-lactoyl-glutathione to form glutathione and D-lactic acid. In Cereibacter sphaeroides (strain ATCC 17029 / ATH 2.4.9) (Rhodobacter sphaeroides), this protein is Hydroxyacylglutathione hydrolase.